A 300-amino-acid chain; its full sequence is uncharacterized protein (300 aa).

Residue Ser49 is the Charge relay system of the active site. Tyr137 functions as the Proton donor in the catalytic mechanism. Catalysis depends on Lys165, which acts as the Schiff-base intermediate with substrate.

Belongs to the DapA family. Homotetramer.

It is found in the cytoplasm. In terms of biological role, upon expression in E.coli complements a dapA deletion mutation, but this may not be its physiological function. This is an uncharacterized protein from Rhizobium meliloti (Ensifer meliloti).